Here is a 139-residue protein sequence, read N- to C-terminus: Large ribosomal subunit protein uL16 (139 aa).

Residues 1–23 (MLQPARTKYRKMHKGRMPGSAHR) form a disordered region. Residues 7–16 (TKYRKMHKGR) show a composition bias toward basic residues.

This sequence belongs to the universal ribosomal protein uL16 family. In terms of assembly, part of the 50S ribosomal subunit.

Binds 23S rRNA and is also seen to make contacts with the A and possibly P site tRNAs. This is Large ribosomal subunit protein uL16 from Myxococcus xanthus (strain DK1622).